A 114-amino-acid chain; its full sequence is Photosystem II reaction center Psb28 protein (114 aa).

This sequence belongs to the Psb28 family. Part of the photosystem II complex.

The protein resides in the plastid. The protein localises to the chloroplast thylakoid membrane. This Thalassiosira pseudonana (Marine diatom) protein is Photosystem II reaction center Psb28 protein.